The chain runs to 657 residues: Single-minded homolog 2 (657 aa).

Positions 1 to 53 constitute a bHLH domain; the sequence is MKEKSKNAAKTRREKENGEFYELAKLLPLPSAITSQLDKASIIRLTTSYLKMR. 2 PAS domains span residues 77–147 and 218–288; these read AKEL…PPLH and PPSA…LVKG. The PAC domain maps to 218 to 288; it reads PPSAITEIKL…YAHHLLLVKG (71 aa). The 322-residue stretch at 336-657 folds into the Single-minded C-terminal domain; that stretch reads EYKELQLSLD…GASVIITNGR (322 aa). Over residues 354 to 364 the composition is skewed to polar residues; it reads ESWRTTLSTSQ. Disordered stretches follow at residues 354 to 387 and 612 to 641; these read ESWRTTLSTSQETRKSAKPKNTKMKTKLRTNPYP and LGSAAPGAPEAAGSLRPRHPGPVAASAPGA. A Nuclear localization signal motif is present at residues 367–386; it reads RKSAKPKNTKMKTKLRTNPY. Residues 369 to 381 are compositionally biased toward basic residues; that stretch reads SAKPKNTKMKTKL.

As to quaternary structure, efficient DNA binding requires dimerization with another bHLH protein. Heterodimer of SIM2 and ARNT. In terms of tissue distribution, transcripts were detected in high levels in kidney followed by skeletal muscle and lung. Low levels were found in testis, brain and heart. In early fetal development it is found in CNS, developing kidney, tongue epithelium and cartilage primordia.

The protein localises to the nucleus. Functionally, transcription factor that may be a master gene of CNS development in cooperation with Arnt. It may have pleiotropic effects in the tissues expressed during development. This Mus musculus (Mouse) protein is Single-minded homolog 2 (Sim2).